The sequence spans 504 residues: Maturase K (504 aa).

Belongs to the intron maturase 2 family. MatK subfamily.

The protein localises to the plastid. Its subcellular location is the chloroplast. In terms of biological role, usually encoded in the trnK tRNA gene intron. Probably assists in splicing its own and other chloroplast group II introns. The polypeptide is Maturase K (Nepenthes gracilis (Slender pitcher plant)).